The chain runs to 617 residues: Dihydroxy-acid dehydratase (617 aa).

Aspartate 81 provides a ligand contact to Mg(2+). Cysteine 122 contributes to the [2Fe-2S] cluster binding site. 2 residues coordinate Mg(2+): aspartate 123 and lysine 124. Lysine 124 is modified (N6-carboxylysine). Cysteine 195 is a binding site for [2Fe-2S] cluster. Glutamate 492 is a binding site for Mg(2+). Catalysis depends on serine 518, which acts as the Proton acceptor.

The protein belongs to the IlvD/Edd family. Homodimer. Requires [2Fe-2S] cluster as cofactor. The cofactor is Mg(2+).

It carries out the reaction (2R)-2,3-dihydroxy-3-methylbutanoate = 3-methyl-2-oxobutanoate + H2O. The enzyme catalyses (2R,3R)-2,3-dihydroxy-3-methylpentanoate = (S)-3-methyl-2-oxopentanoate + H2O. The protein operates within amino-acid biosynthesis; L-isoleucine biosynthesis; L-isoleucine from 2-oxobutanoate: step 3/4. It functions in the pathway amino-acid biosynthesis; L-valine biosynthesis; L-valine from pyruvate: step 3/4. In terms of biological role, functions in the biosynthesis of branched-chain amino acids. Catalyzes the dehydration of (2R,3R)-2,3-dihydroxy-3-methylpentanoate (2,3-dihydroxy-3-methylvalerate) into 2-oxo-3-methylpentanoate (2-oxo-3-methylvalerate) and of (2R)-2,3-dihydroxy-3-methylbutanoate (2,3-dihydroxyisovalerate) into 2-oxo-3-methylbutanoate (2-oxoisovalerate), the penultimate precursor to L-isoleucine and L-valine, respectively. This is Dihydroxy-acid dehydratase from Azorhizobium caulinodans (strain ATCC 43989 / DSM 5975 / JCM 20966 / LMG 6465 / NBRC 14845 / NCIMB 13405 / ORS 571).